A 74-amino-acid polypeptide reads, in one-letter code: Lambda-hexatoxin-Hv1d (74 aa).

Positions 1–22 (MNTATCFIVLLVVATVIGGIEA) are cleaved as a signal peptide. A propeptide spanning residues 23–35 (GESDMRKDVMGLF) is cleaved from the precursor. Disulfide bonds link cysteine 40-cysteine 54, cysteine 47-cysteine 59, cysteine 50-cysteine 51, and cysteine 53-cysteine 69.

Belongs to the neurotoxin 11 (kappa toxin) family. As to expression, expressed by the venom gland.

Its subcellular location is the secreted. In terms of biological role, this excitatory toxin inhibits insect calcium-activated potassium (KCa) channels (Slo-type). This is Lambda-hexatoxin-Hv1d from Hadronyche versuta (Blue mountains funnel-web spider).